Here is a 375-residue protein sequence, read N- to C-terminus: Phospho-N-acetylmuramoyl-pentapeptide-transferase (375 aa).

10 helical membrane-spanning segments follow: residues 2 to 22 (IGLLIGGVLGLVLSAAGTPLF), 55 to 75 (AVIIGSLVLAYLITHGLLAVL), 82 to 102 (PTASGLILLLLTVGMAFVGFV), 120 to 140 (GKIILQALIGTAFAVLALNFP), 158 to 178 (IPWLDLAFAGPAIGVILFVIW), 198 to 218 (GLATGATAMITGAYVLISLFQ), 237 to 257 (PMDLALLAAILTGSLLGFLWW), 264 to 284 (IFMGDTGSLGLGGALAGFAIF), 289 to 309 (ILVAVLAGLMVAITLSVIIQV), and 345 to 365 (WLLSLMCVTVGLAIFYGDWLI).

The protein belongs to the glycosyltransferase 4 family. MraY subfamily. Requires Mg(2+) as cofactor.

It localises to the cell membrane. The catalysed reaction is UDP-N-acetyl-alpha-D-muramoyl-L-alanyl-gamma-D-glutamyl-meso-2,6-diaminopimeloyl-D-alanyl-D-alanine + di-trans,octa-cis-undecaprenyl phosphate = di-trans,octa-cis-undecaprenyl diphospho-N-acetyl-alpha-D-muramoyl-L-alanyl-D-glutamyl-meso-2,6-diaminopimeloyl-D-alanyl-D-alanine + UMP. Its pathway is cell wall biogenesis; peptidoglycan biosynthesis. Catalyzes the initial step of the lipid cycle reactions in the biosynthesis of the cell wall peptidoglycan: transfers peptidoglycan precursor phospho-MurNAc-pentapeptide from UDP-MurNAc-pentapeptide onto the lipid carrier undecaprenyl phosphate, yielding undecaprenyl-pyrophosphoryl-MurNAc-pentapeptide, known as lipid I. The sequence is that of Phospho-N-acetylmuramoyl-pentapeptide-transferase from Micrococcus luteus (strain ATCC 4698 / DSM 20030 / JCM 1464 / CCM 169 / CCUG 5858 / IAM 1056 / NBRC 3333 / NCIMB 9278 / NCTC 2665 / VKM Ac-2230) (Micrococcus lysodeikticus).